Here is a 34-residue protein sequence, read N- to C-terminus: Photosystem II reaction center protein M (34 aa).

A helical transmembrane segment spans residues 5 to 25; the sequence is ILAFIATALFILVPTAFLLII.

Belongs to the PsbM family. PSII is composed of 1 copy each of membrane proteins PsbA, PsbB, PsbC, PsbD, PsbE, PsbF, PsbH, PsbI, PsbJ, PsbK, PsbL, PsbM, PsbT, PsbX, PsbY, PsbZ, Psb30/Ycf12, at least 3 peripheral proteins of the oxygen-evolving complex and a large number of cofactors. It forms dimeric complexes.

Its subcellular location is the plastid. The protein localises to the chloroplast thylakoid membrane. One of the components of the core complex of photosystem II (PSII). PSII is a light-driven water:plastoquinone oxidoreductase that uses light energy to abstract electrons from H(2)O, generating O(2) and a proton gradient subsequently used for ATP formation. It consists of a core antenna complex that captures photons, and an electron transfer chain that converts photonic excitation into a charge separation. This subunit is found at the monomer-monomer interface. The chain is Photosystem II reaction center protein M from Calycanthus floridus var. glaucus (Eastern sweetshrub).